Consider the following 415-residue polypeptide: MGILLAVPEIIAASVAGGAEALSIAGSGAAIATGEGLAALGGLTESAALLGETVEISEAAATVLTKVPELVTVTQGVTAAVQGGAGLVGGIYTALAADRPGDLPASTPTGSPSGLHPPAGYNPQGGGLNIQSIHKPLHAPYPGMALAPIPEYNLETGIPGVPDWVFNFIASHLPELPSLQDVFNRIAYGIWTSYYNTGRTVVNRAVSEELQRLLGDLEYGFRTALATIGESDPVNAIVEQVRSFVSGGRQRELLQIAAGQPVDISEGVSRGTATISNAVEAVRDATQRLSQATYNFVYDASTLPRDGFNALSDGVHRLGQWISMPGATGGTPHYAAPDWILYVLEELNSDISKIPTQGIKRKLQQNGLHSKASLHSKTRKVTKKSTHKSAKPSKTSQKRRGRRAGRRTTVRRNRV.

Gly2 is lipidated: N-myristoyl glycine; by host. Residues 102–121 are disordered; it reads DLPASTPTGSPSGLHPPAGY. The segment at 318–353 is D1; that stretch reads LGQWISMPGATGGTPHYAAPDWILYVLEELNSDISK. Residues 358-409 are DNA-binding; that stretch reads GIKRKLQQNGLHSKASLHSKTRKVTKKSTHKSAKPSKTSQKRRGRRAGRRTT. The interval 365-415 is disordered; that stretch reads QNGLHSKASLHSKTRKVTKKSTHKSAKPSKTSQKRRGRRAGRRTTVRRNRV. The span at 372–415 shows a compositional bias: basic residues; sequence ASLHSKTRKVTKKSTHKSAKPSKTSQKRRGRRAGRRTTVRRNRV. A Nuclear localization signal motif is present at residues 377–384; sequence KTRKVTKK.

This sequence belongs to the polyomaviruses capsid protein VP2 family. Forms homooligomers, and heterooligomers with VP3 in the endoplasmic reticulum membrane. Interacts (via D1 domain) with VP1. As to quaternary structure, interacts (via D1 domain) with VP1.

It localises to the virion. The protein resides in the host nucleus. It is found in the host endoplasmic reticulum. Its subcellular location is the host endoplasmic reticulum membrane. Functionally, structural protein that resides within the core of the capsid surrounded by 72 VP1 pentamers. Participates in host cell receptor binding together with VP1. Following virus endocytosis and trafficking to the endoplasmic reticulum, VP2 and VP3 form oligomers and integrate into the endoplasmic reticulum membrane. Heterooligomer VP2-VP3 may create a viroporin for transporting the viral genome across the endoplasmic reticulum membrane to the cytoplasm. Nuclear entry of the viral DNA involves the selective exposure and importin recognition of VP2 or VP3 nuclear localization signal (shared C-terminus). Plays a role in virion assembly within the nucleus in particular through a DNA-binding domain located in the C-terminal region. An N-terminal myristoylation suggests a scaffold function for virion assembly. In terms of biological role, structural protein that resides within the core of the capsid surrounded by 72 VP1 pentamers. Following virus endocytosis and trafficking to the endoplasmic reticulum, VP2 and VP3 form oligomers and integrate into the endoplasmic reticulum membrane. Heterooligomer VP2-VP3 may create a viroporin for transporting the viral genome across the endoplasmic reticulum membrane to the cytoplasm. Nuclear entry of the viral DNA involves the selective exposure and importin recognition of VP2 or VP3 nuclear localization signal (shared C-terminus). Plays a role in virion assembly within the nucleus. This Homo sapiens (Human) protein is Minor capsid protein VP2.